The following is a 129-amino-acid chain: MCPECFFLMLFFCGYRACYCSSSFSSSSSSSSFRSSPAYGFSGRPPGGAGCRERSQRSCLRPGGLPSLTRNPGLQRPFRSRSLCRAVACAPGIPAKGRRDVRGNAVSQTALHVVAAGPCSLPAGCHTPV.

Positions 1–17 (MCPECFFLMLFFCGYRA) are cleaved as a signal peptide. Residues 26–36 (SSSSSSSFRSS) show a composition bias toward low complexity. Residues 26-76 (SSSSSSSFRSSPAYGFSGRPPGGAGCRERSQRSCLRPGGLPSLTRNPGLQR) are disordered.

This is an uncharacterized protein from Escherichia coli O157:H7.